A 165-amino-acid polypeptide reads, in one-letter code: Small ribosomal subunit protein uS5 (165 aa).

The S5 DRBM domain maps to 10–73 (QIEKLISLNR…TSARKNLRFV (64 aa)).

It belongs to the universal ribosomal protein uS5 family. As to quaternary structure, part of the 30S ribosomal subunit. Contacts proteins S4 and S8.

With S4 and S12 plays an important role in translational accuracy. In terms of biological role, located at the back of the 30S subunit body where it stabilizes the conformation of the head with respect to the body. The chain is Small ribosomal subunit protein uS5 from Borreliella burgdorferi (strain ATCC 35210 / DSM 4680 / CIP 102532 / B31) (Borrelia burgdorferi).